The following is an 895-amino-acid chain: Dystroglycan 1 (895 aa).

Residues 1 to 29 form the signal peptide; the sequence is MRMSVGSAVPLPLWGRTFLLLLSVAVTQS. The tract at residues 30 to 408 is required for laminin recognition; the sequence is HWPSEPSEAV…SQIRPTMTIP (379 aa). Positions 49 to 71 are O-glycosylated at one site; that stretch reads SMHSALSDLHETVPTVVGIPDGT. An N-linked (GlcNAc...) asparagine glycan is attached at N141. Residues C182 and C264 are joined by a disulfide bond. The segment at 316–485 is mucin-like domain; that stretch reads ATPTPVTAIG…PATRMRTTTS (170 aa). O-linked (Man6P...) threonine glycans are attached at residues T317, T319, and T379. The disordered stretch occupies residues 381-500; that stretch reads TLGPIQPTRV…GEPNQRPELK (120 aa). Positions 393-403 are enriched in polar residues; the sequence is AGTTVPSQIRP. Residues 413 to 447 show a composition bias toward low complexity; it reads PSTVTTPPTTTTKKPRVSTPRPATPSTDSSTTTTR. Residues 463 to 485 form an O-glycosylated at seven sites with GalNAc region; sequence TTKAPITRLETASPATRMRTTTS. Residues 603–712 enclose the Peptidase S72 domain; the sequence is KAPARFKAKL…MSITVTGSGS (110 aa). N-linked (GlcNAc...) asparagine glycosylation is found at N641, N649, and N661. The Extracellular portion of the chain corresponds to 654–749; it reads SIVVEWTNNT…DPEKSSEDDV (96 aa). The cysteines at positions 669 and 713 are disulfide-linked. A disordered region spans residues 724–747; that stretch reads PMRVPSEAPATEVPDRDPEKSSED. Basic and acidic residues predominate over residues 736-747; sequence VPDRDPEKSSED. Residues 750 to 775 form a helical membrane-spanning segment; sequence YLHTVIPAVVVAAILLIAGIIAMICY. The short motif at 776-782 is the Nuclear localization signal element; that stretch reads RKKRKGK. The Cytoplasmic segment spans residues 776 to 895; that stretch reads RKKRKGKLTL…YRSPPPYVPP (120 aa). T790 carries the post-translational modification Phosphothreonine. The segment at 819–895 is required for interaction with CAV3; the sequence is LQEEKAPLPP…YRSPPPYVPP (77 aa). Residues 823 to 895 form a disordered region; that stretch reads KAPLPPPEYP…YRSPPPYVPP (73 aa). Over residues 832 to 846 the composition is skewed to polar residues; it reads PNQSMPETTPLNQDT. Over residues 859-870 the composition is skewed to pro residues; the sequence is SAPPYQPPPPFT. Positions 880-895 are required for binding DMD and UTRN; that stretch reads PKNMTPYRSPPPYVPP. The PPXY motif motif lies at 889-892; sequence PPPY. Y892 carries the phosphotyrosine; by SRC modification.

Monomer. Heterodimer of alpha- and beta-dystroglycan subunits which are the central components of the dystrophin-glycoprotein complex. This complex then can form a dystrophin-associated glycoprotein complex (DGC) which is composed of three subcomplexes: a cytoplasmic complex comprised of DMD (or UTRN), DTNA and a number of syntrophins, such as SNTB1, SNTB2, SNTG1 and SNTG2, the transmembrane dystroglycan complex, and the sarcoglycan-sarcospan complex. Interacts (via the N-terminal of alphaDAG1) with LARGE1; the interaction enhances laminin binding. Interacts with SGCD. Interacts with AGR2 and AGR3. Interacts (betaDAG1) with DMD; the interaction is inhibited by phosphorylation on the PPXY motif. Interacts (betaDAG1, via its PPXY motif) with UTRN (via its WWW and ZZ domains); the interaction is inhibited by phosphorylation on the PPXY motif. Interacts (betaDAG1, via its phosphorylated PPXY motif) with the SH2 domain-containing proteins, FYN, CSK, NCK and SHC. Interacts (betaDAG1) with CAV3 (via a central WW-like domain); the interaction disrupts the binding of DMD. BetaDAG1 directly interacts with ANK3, but not with ANK2; this interaction does not interfere with DMD-binding and is required for retention at costameres. Identified in a dystroglycan complex that contains at least PRX, DRP2, UTRN, DMD and DAG1. Interacts with POMGNT1. BetaDAG1 interacts with CD93. Post-translationally, O-glycosylated. POMGNT1 catalyzes the initial addition of N-acetylglucosamine, giving rise to the GlcNAc(beta1-2)Man(alpha1-)O-Ser/Thr moiety and thus providing the necessary basis for the addition of further carbohydrate moieties. Heavily O-glycosylated comprising of up to two thirds of its mass and the carbohydrate composition differs depending on tissue type. Mucin-type O-glycosylation is important for ligand binding activity. O-mannosylation is found in high abundance in both brain and muscle where the most abundant glycan is Sia-alpha-2-3-Gal-beta-1-4-Glc-NAc-beta-1-2-Man. In muscle, glycosylation on Thr-317, Thr-319 and Thr-379 by a phosphorylated O-mannosyl glycan with the structure 2-(N-acetylamido)-2-deoxygalactosyl-beta-1,3-2-(N-acetylamido)-2-deoxyglucosyl-beta-1,4-6-phosphomannose is mediated by like-acetylglucosaminyltransferase (LARGE1) protein amd is required for laminin binding. O-glycosylated in the N-terminal region with a core 1 or possibly core 8 glycan. The brain form displays a unique glycosylation pattern which is absent in other tissues; this form shows enhanced binding to laminin LAMA5 compared to the skeletal muscle form. N-glycosylated. In terms of processing, autolytic cleavage produces the alpha and beta subunits. In cutaneous cells, as well as in certain pathological conditions, shedding of beta-dystroglycan can occur releasing a peptide of about 30 kDa. Post-translationally, SRC-mediated phosphorylation of the PPXY motif of the beta subunit recruits SH2 domain-containing proteins, but inhibits binding to WWW domain-containing proteins, DMD and UTRN. This phosphorylation also inhibits nuclear entry. In terms of tissue distribution, expressed in brain (at protein level). Expressed in the myelin sheath of peripheral nerves.

It localises to the secreted. The protein resides in the extracellular space. The protein localises to the cell membrane. Its subcellular location is the cytoplasm. It is found in the cytoskeleton. It localises to the nucleus. The protein resides in the nucleoplasm. The protein localises to the sarcolemma. Its subcellular location is the postsynaptic cell membrane. Functionally, the dystroglycan complex is involved in a number of processes including laminin and basement membrane assembly, sarcolemmal stability, cell survival, peripheral nerve myelination, nodal structure, cell migration, and epithelial polarization. Its function is as follows. Extracellular peripheral glycoprotein that acts as a receptor for extracellular matrix proteins containing laminin-G domains. Receptor for laminin-2 (LAMA2) and agrin in peripheral nerve Schwann cells. Also acts as a receptor for laminin LAMA5. Transmembrane protein that plays important roles in connecting the extracellular matrix to the cytoskeleton. Acts as a cell adhesion receptor in both muscle and non-muscle tissues. Receptor for both DMD and UTRN and, through these interactions, scaffolds axin to the cytoskeleton. Also functions in cell adhesion-mediated signaling and implicated in cell polarity. This Bos taurus (Bovine) protein is Dystroglycan 1.